The primary structure comprises 800 residues: Fibroblast growth factor receptor 4 (800 aa).

The first 16 residues, 1 to 16 (MWLLLALLSIFQETPA), serve as a signal peptide directing secretion. Ig-like C2-type domains follow at residues 17 to 115 (FSLE…LIMD), 148 to 236 (PQRM…YLLD), and 245 to 345 (PILQ…AWLT). Residues 17–367 (FSLEASEEME…TATSEARYTD (351 aa)) are Extracellular-facing. C54 and C98 are disulfide-bonded. N109 carries an N-linked (GlcNAc...) asparagine glycan. C168 and C220 form a disulfide bridge. 3 N-linked (GlcNAc...) asparagine glycosylation sites follow: N254, N286, and N307. A disulfide bridge links C267 with C329. A helical transmembrane segment spans residues 368–388 (IILYVSGSLALVLLLLLAGVY). Over 389–800 (HRQAIHGHHS…PFPFPEAQTT (412 aa)) the chain is Cytoplasmic. Residues 465–753 (LVLGKPLGEG…VLLAVSEEYL (289 aa)) form the Protein kinase domain. ATP-binding positions include 471–479 (LGEGCFGQV) and K501. S571 is modified (phosphoserine). The active-site Proton acceptor is the D610. Residues Y640, Y641, and Y752 each carry the phosphotyrosine; by autocatalysis modification. Residues 768-800 (DASSTCSSSDSVFSHDPLPLEPSPFPFPEAQTT) form a disordered region. Residues 770–781 (SSTCSSSDSVFS) are compositionally biased toward low complexity.

This sequence belongs to the protein kinase superfamily. Tyr protein kinase family. Fibroblast growth factor receptor subfamily. Monomer. Homodimer after ligand binding. Interacts with FGF1, FGF2, FGF4, FGF6, FGF8, FGF9, FGF16, FGF17, FGF18, FGF19, FGF21 and FGF23 (in vitro). Binding affinity for FGF family members is enhanced by interactions between FGFs and heparan sulfate proteoglycans. Interacts with KLB; this strongly increases the affinity for FGF19 and FGF23. Affinity for FGF19 is strongly increased by KLB and sulfated glycosaminoglycans. KLB and KL both interact with the core-glycosylated FGFR4 in the endoplasmic reticulum and promote its degradation, so that only FGFR4 with fully mature N-glycans is expressed at the cell surface. Identified in a complex with NCAM1, CDH2, PLCG1, FRS2, SRC, SHC1, GAP43 and CTTN. Interacts with MMP14 and HIP1. Interacts with STAT3. Post-translationally, N-glycosylated. Full maturation of the glycan chains in the Golgi is essential for high affinity interaction with FGF19. Ubiquitinated. Subject to proteasomal degradation when not fully glycosylated. In terms of processing, autophosphorylated. Binding of FGF family members together with heparan sulfate proteoglycan or heparin promotes receptor dimerization and autophosphorylation on tyrosine residues. Autophosphorylation occurs in trans between the two FGFR molecules present in the dimer.

It is found in the cell membrane. The protein localises to the endosome. The protein resides in the endoplasmic reticulum. It catalyses the reaction L-tyrosyl-[protein] + ATP = O-phospho-L-tyrosyl-[protein] + ADP + H(+). With respect to regulation, present in an inactive conformation in the absence of bound ligand. Ligand binding leads to dimerization and activation by autophosphorylation on tyrosine residues. Tyrosine-protein kinase that acts as a cell-surface receptor for fibroblast growth factors and plays a role in the regulation of cell proliferation, differentiation and migration, and in regulation of lipid metabolism, bile acid biosynthesis, glucose uptake, vitamin D metabolism and phosphate homeostasis. Required for normal down-regulation of the expression of CYP7A1, the rate-limiting enzyme in bile acid synthesis, in response to FGF19. Phosphorylates PLCG1 and FRS2. Ligand binding leads to the activation of several signaling cascades. Activation of PLCG1 leads to the production of the cellular signaling molecules diacylglycerol and inositol 1,4,5-trisphosphate. Phosphorylation of FRS2 triggers recruitment of GRB2, GAB1, PIK3R1 and SOS1, and mediates activation of RAS, MAPK1/ERK2, MAPK3/ERK1 and the MAP kinase signaling pathway, as well as of the AKT1 signaling pathway. Promotes SRC-dependent phosphorylation of the matrix protease MMP14 and its lysosomal degradation. FGFR4 signaling is down-regulated by receptor internalization and degradation; MMP14 promotes internalization and degradation of FGFR4. The polypeptide is Fibroblast growth factor receptor 4 (Fgfr4) (Rattus norvegicus (Rat)).